We begin with the raw amino-acid sequence, 320 residues long: Acetyl-coenzyme A carboxylase carboxyl transferase subunit alpha (320 aa).

Residues 34–288 (RLEEALEAAR…GEALERVLAG (255 aa)) enclose the CoA carboxyltransferase C-terminal domain.

The protein belongs to the AccA family. As to quaternary structure, acetyl-CoA carboxylase is a heterohexamer composed of biotin carboxyl carrier protein (AccB), biotin carboxylase (AccC) and two subunits each of ACCase subunit alpha (AccA) and ACCase subunit beta (AccD).

Its subcellular location is the cytoplasm. The catalysed reaction is N(6)-carboxybiotinyl-L-lysyl-[protein] + acetyl-CoA = N(6)-biotinyl-L-lysyl-[protein] + malonyl-CoA. It participates in lipid metabolism; malonyl-CoA biosynthesis; malonyl-CoA from acetyl-CoA: step 1/1. Its function is as follows. Component of the acetyl coenzyme A carboxylase (ACC) complex. First, biotin carboxylase catalyzes the carboxylation of biotin on its carrier protein (BCCP) and then the CO(2) group is transferred by the carboxyltransferase to acetyl-CoA to form malonyl-CoA. The sequence is that of Acetyl-coenzyme A carboxylase carboxyl transferase subunit alpha from Rubrobacter xylanophilus (strain DSM 9941 / JCM 11954 / NBRC 16129 / PRD-1).